Here is a 433-residue protein sequence, read N- to C-terminus: Protein root UVB sensitive 2, chloroplastic (433 aa).

This sequence belongs to the RUS1 family. In terms of assembly, interacts (via the DUF647 domain) with RUS1 (via the DUF647 domain). Expressed throughout the plant, with a higher expression near the root apical meristem, in the cortex region of the root elongation zone, in lateral roots and emerging lateral roots. Not detected in extreme root apical meristem or root cap.

It is found in the plastid. Functionally, involved in a root UV-B sensing pathway and in the protection against the hypersensitivity to very low-fluence-rate (VLF) UV-B. RSU1 and RUS2 are probably both negative modulators of the same UV-B perception pathway, which when overstimulated in the roots causes a block to postgermination development. Required for polar auxin transport and to maintain the normal levels of PIN proteins in the root. The polypeptide is Protein root UVB sensitive 2, chloroplastic (Arabidopsis thaliana (Mouse-ear cress)).